The chain runs to 338 residues: Lipoate-protein ligase A (338 aa).

Residues 29–216 enclose the BPL/LPL catalytic domain; the sequence is PATQRVLFLW…AFFAHYGERV (188 aa). ATP contacts are provided by residues Arg-71, 76–79, and Lys-134; that span reads GAVF. Lys-134 contacts (R)-lipoate.

The protein belongs to the LplA family. As to quaternary structure, monomer.

It localises to the cytoplasm. It carries out the reaction L-lysyl-[lipoyl-carrier protein] + (R)-lipoate + ATP = N(6)-[(R)-lipoyl]-L-lysyl-[lipoyl-carrier protein] + AMP + diphosphate + H(+). The protein operates within protein modification; protein lipoylation via exogenous pathway; protein N(6)-(lipoyl)lysine from lipoate: step 1/2. It participates in protein modification; protein lipoylation via exogenous pathway; protein N(6)-(lipoyl)lysine from lipoate: step 2/2. Functionally, catalyzes both the ATP-dependent activation of exogenously supplied lipoate to lipoyl-AMP and the transfer of the activated lipoyl onto the lipoyl domains of lipoate-dependent enzymes. This chain is Lipoate-protein ligase A, found in Escherichia coli O8 (strain IAI1).